The sequence spans 157 residues: Oocyte zinc finger protein XlCOF2 (157 aa).

5 C2H2-type zinc fingers span residues 6–28, 34–56, 79–101, 107–129, and 135–157; these read FTCTECGKNFSFTTSFIRHMRIH, YSCADCGKHFSEKMYLQFHQKNP, FTCTECGKCFSLSSYLHRHQRLH, FSCAECGKAFSGKAQLQDHQNTH, and FTCTECGKCFTRKGSLQMHQKIH.

The protein belongs to the krueppel C2H2-type zinc-finger protein family.

It localises to the nucleus. Its function is as follows. May be involved in transcriptional regulation. This Xenopus laevis (African clawed frog) protein is Oocyte zinc finger protein XlCOF2.